The following is a 508-amino-acid chain: Glycerol kinase (508 aa).

T14 contacts ADP. ATP is bound by residues T14, T15, and S16. T14 is a sn-glycerol 3-phosphate binding site. R18 is a binding site for ADP. Sn-glycerol 3-phosphate contacts are provided by R84, E85, and Y136. 3 residues coordinate glycerol: R84, E85, and Y136. The residue at position 232 (H232) is a Phosphohistidine; by HPr. D246 contributes to the sn-glycerol 3-phosphate binding site. The glycerol site is built by D246 and Q247. 2 residues coordinate ADP: T268 and G311. The ATP site is built by T268, G311, Q315, and G412. 2 residues coordinate ADP: G412 and N416.

Belongs to the FGGY kinase family. As to quaternary structure, homotetramer and homodimer (in equilibrium). The phosphoenolpyruvate-dependent sugar phosphotransferase system (PTS), including enzyme I, and histidine-containing protein (HPr) are required for the phosphorylation, which leads to the activation of the enzyme.

The catalysed reaction is glycerol + ATP = sn-glycerol 3-phosphate + ADP + H(+). The protein operates within polyol metabolism; glycerol degradation via glycerol kinase pathway; sn-glycerol 3-phosphate from glycerol: step 1/1. With respect to regulation, activated by phosphorylation and inhibited by fructose 1,6-bisphosphate (FBP). Functionally, key enzyme in the regulation of glycerol uptake and metabolism. Catalyzes the phosphorylation of glycerol to yield sn-glycerol 3-phosphate. This Streptococcus pyogenes serotype M28 (strain MGAS6180) protein is Glycerol kinase.